Consider the following 116-residue polypeptide: Large ribosomal subunit protein uL18 (116 aa).

The protein belongs to the universal ribosomal protein uL18 family. In terms of assembly, part of the 50S ribosomal subunit; part of the 5S rRNA/L5/L18/L25 subcomplex. Contacts the 5S and 23S rRNAs.

This is one of the proteins that bind and probably mediate the attachment of the 5S RNA into the large ribosomal subunit, where it forms part of the central protuberance. The sequence is that of Large ribosomal subunit protein uL18 from Pseudomonas syringae pv. tomato (strain ATCC BAA-871 / DC3000).